Consider the following 126-residue polypeptide: C-type natriuretic peptide (126 aa).

Residues 1–23 form the signal peptide; sequence MHLSQLLACALLLSLLSLRPSEA. The tract at residues 20–71 is disordered; that stretch reads PSEAKPGAPPKVPRTPPGEEVAEPQAAGGGQKKGDKTPGGGGANLKDDRSRL. The propeptide occupies 24–73; that stretch reads KPGAPPKVPRTPPGEEVAEPQAAGGGQKKGDKTPGGGGANLKDDRSRLLR. Over residues 26-35 the composition is skewed to pro residues; the sequence is GAPPKVPRTP. Residues 46–62 show a composition bias toward gly residues; the sequence is AGGGQKKGDKTPGGGGA. Residues Cys-110 and Cys-126 are joined by a disulfide bond.

The protein belongs to the natriuretic peptide family. Post-translationally, degraded by IDE (in vitro).

It is found in the secreted. Hormone which plays a role in endochondral ossification through regulation of cartilaginous growth plate chondrocytes proliferation and differentiation. May also be vasoactive and natriuretic. Acts by specifically binding and stimulating NPR2 to produce cGMP. Binds the clearance receptor NPR3. In Ovis aries (Sheep), this protein is C-type natriuretic peptide (NPPC).